Consider the following 173-residue polypeptide: MPLNIEDKKAVVAEVSAQVAKAQTIVVAEYRGITVGDLTKLRATARTQGVYLRVLKNTLARRAVEGTPFAGLAEQMTGPLIYGISEDAVSSAKVLNDFAKTNDKLVLRAGSYNGNVLDAGAVKALASIPSRDELIAQLLGVMQAPVSGFARLLAAVAAKKAEGAPAEAEAPAA.

Belongs to the universal ribosomal protein uL10 family. In terms of assembly, part of the ribosomal stalk of the 50S ribosomal subunit. The N-terminus interacts with L11 and the large rRNA to form the base of the stalk. The C-terminus forms an elongated spine to which L12 dimers bind in a sequential fashion forming a multimeric L10(L12)X complex.

Its function is as follows. Forms part of the ribosomal stalk, playing a central role in the interaction of the ribosome with GTP-bound translation factors. This Cupriavidus metallidurans (strain ATCC 43123 / DSM 2839 / NBRC 102507 / CH34) (Ralstonia metallidurans) protein is Large ribosomal subunit protein uL10.